The chain runs to 447 residues: tRNA-2-methylthio-N(6)-dimethylallyladenosine synthase (447 aa).

The MTTase N-terminal domain maps to Lys14–Gln130. 6 residues coordinate [4Fe-4S] cluster: Cys23, Cys59, Cys93, Cys166, Cys170, and Cys173. The region spanning Arg152–Glu382 is the Radical SAM core domain. The region spanning Ala385–Ala447 is the TRAM domain.

It belongs to the methylthiotransferase family. MiaB subfamily. As to quaternary structure, monomer. [4Fe-4S] cluster serves as cofactor.

Its subcellular location is the cytoplasm. It catalyses the reaction N(6)-dimethylallyladenosine(37) in tRNA + (sulfur carrier)-SH + AH2 + 2 S-adenosyl-L-methionine = 2-methylsulfanyl-N(6)-dimethylallyladenosine(37) in tRNA + (sulfur carrier)-H + 5'-deoxyadenosine + L-methionine + A + S-adenosyl-L-homocysteine + 2 H(+). Functionally, catalyzes the methylthiolation of N6-(dimethylallyl)adenosine (i(6)A), leading to the formation of 2-methylthio-N6-(dimethylallyl)adenosine (ms(2)i(6)A) at position 37 in tRNAs that read codons beginning with uridine. The polypeptide is tRNA-2-methylthio-N(6)-dimethylallyladenosine synthase (Chlorobium phaeobacteroides (strain BS1)).